A 70-amino-acid polypeptide reads, in one-letter code: Putative membrane protein insertion efficiency factor (70 aa).

The protein belongs to the UPF0161 family.

It localises to the cell inner membrane. In terms of biological role, could be involved in insertion of integral membrane proteins into the membrane. In Rhizorhabdus wittichii (strain DSM 6014 / CCUG 31198 / JCM 15750 / NBRC 105917 / EY 4224 / RW1) (Sphingomonas wittichii), this protein is Putative membrane protein insertion efficiency factor.